A 406-amino-acid polypeptide reads, in one-letter code: Elongation factor Ts, mitochondrial (406 aa).

The segment at 387 to 406 (ARPSDETSFADQVKEAAGLA) is disordered.

It belongs to the EF-Ts family.

It localises to the mitochondrion. Its function is as follows. Associates with the EF-Tu.GDP complex and induces the exchange of GDP to GTP. It remains bound to the aminoacyl-tRNA.EF-Tu.GTP complex up to the GTP hydrolysis stage on the ribosome. The protein is Elongation factor Ts, mitochondrial of Malassezia globosa (strain ATCC MYA-4612 / CBS 7966) (Dandruff-associated fungus).